Here is a 180-residue protein sequence, read N- to C-terminus: MAKRVYAIAMRYAQALHELAKEQKSLDKWQEDLQNLSRLTEDASVDEFLSNPKIVSARKHAVLAKLSDIDPLMLNLVDMLVATRRLGIMRAISGEYNRLLNEARGVEDAIVTTAKPASEADTEIIRQQLSKITGKKINILTATDPGLIAGLKARIGDKLIDGSISRRLVLLQNEISQGRI.

It belongs to the ATPase delta chain family. In terms of assembly, F-type ATPases have 2 components, F(1) - the catalytic core - and F(0) - the membrane proton channel. F(1) has five subunits: alpha(3), beta(3), gamma(1), delta(1), epsilon(1). F(0) has three main subunits: a(1), b(2) and c(10-14). The alpha and beta chains form an alternating ring which encloses part of the gamma chain. F(1) is attached to F(0) by a central stalk formed by the gamma and epsilon chains, while a peripheral stalk is formed by the delta and b chains.

It localises to the cell membrane. F(1)F(0) ATP synthase produces ATP from ADP in the presence of a proton or sodium gradient. F-type ATPases consist of two structural domains, F(1) containing the extramembraneous catalytic core and F(0) containing the membrane proton channel, linked together by a central stalk and a peripheral stalk. During catalysis, ATP synthesis in the catalytic domain of F(1) is coupled via a rotary mechanism of the central stalk subunits to proton translocation. Functionally, this protein is part of the stalk that links CF(0) to CF(1). It either transmits conformational changes from CF(0) to CF(1) or is implicated in proton conduction. The chain is ATP synthase subunit delta from Dehalococcoides mccartyi (strain ATCC BAA-2100 / JCM 16839 / KCTC 5957 / BAV1).